A 188-amino-acid polypeptide reads, in one-letter code: Elongation factor P (188 aa).

Belongs to the elongation factor P family.

The protein localises to the cytoplasm. Its pathway is protein biosynthesis; polypeptide chain elongation. In terms of biological role, involved in peptide bond synthesis. Stimulates efficient translation and peptide-bond synthesis on native or reconstituted 70S ribosomes in vitro. Probably functions indirectly by altering the affinity of the ribosome for aminoacyl-tRNA, thus increasing their reactivity as acceptors for peptidyl transferase. The protein is Elongation factor P of Anaplasma marginale (strain St. Maries).